A 282-amino-acid polypeptide reads, in one-letter code: 2,3,4,5-tetrahydropyridine-2,6-dicarboxylate N-succinyltransferase (282 aa).

Positions 109 and 146 each coordinate substrate.

This sequence belongs to the transferase hexapeptide repeat family. Homotrimer.

Its subcellular location is the cytoplasm. The enzyme catalyses (S)-2,3,4,5-tetrahydrodipicolinate + succinyl-CoA + H2O = (S)-2-succinylamino-6-oxoheptanedioate + CoA. Its pathway is amino-acid biosynthesis; L-lysine biosynthesis via DAP pathway; LL-2,6-diaminopimelate from (S)-tetrahydrodipicolinate (succinylase route): step 1/3. The polypeptide is 2,3,4,5-tetrahydropyridine-2,6-dicarboxylate N-succinyltransferase (Bartonella bacilliformis (strain ATCC 35685 / KC583 / Herrer 020/F12,63)).